The chain runs to 492 residues: Serine/threonine protein phosphatase 2A 57 kDa regulatory subunit B' theta isoform (492 aa).

Positions 1 to 63 (MWKQILSKLP…GFKEGNLKGN (63 aa)) are disordered. The segment covering 16–39 (KNHSSSSSSTSKSSDNGASKSGNS) has biased composition (low complexity). Positions 490–492 (SSL) match the Microbody targeting signal motif.

Belongs to the phosphatase 2A regulatory subunit B56 family. PP2A consists of a common heteromeric enzyme, composed of a catalytic subunit (subunits C), a constant regulatory subunit (subunit A), and a variety of regulatory subunits such as subunits B (the R2/B/PR55/B55, R3/B''/PR72/PR130/PR59 and R5/B'/B56 families). Interacts with BZR1. Interacts with PP2A2, PP2A5 and PP2AA2. As to expression, highly expressed in dry seeds. Expressed in roots, cotyledons, rosette leaves and flowers.

The protein localises to the cytoplasm. Its subcellular location is the cytosol. It localises to the peroxisome. The B regulatory subunit may modulate substrate selectivity and catalytic activity, and may also direct the localization of the catalytic enzyme to a particular subcellular compartment. Associates with the serine/threonine-protein phosphatase PP2A catalytic subunit C and regulatory subunit A to positively regulates beta-oxidation of fatty acids and protoauxins in peroxisomes by dephosphorylating peroxisomal beta-oxidation-related proteins. Required for the formation of the PP2A holoenzyme that negatively regulates brassinosteroid signaling by dephosphorylating and inactivating BRI1 in the cytoplasm. This chain is Serine/threonine protein phosphatase 2A 57 kDa regulatory subunit B' theta isoform (B'THETA), found in Arabidopsis thaliana (Mouse-ear cress).